We begin with the raw amino-acid sequence, 375 residues long: Chaperone protein DnaJ (375 aa).

The region spanning 5-70 (DYYSLLEVER…QKRAAYDRYG (66 aa)) is the J domain. A CR-type zinc finger spans residues 135-213 (GKTVDIEIDV…CHGEGRCEKH (79 aa)). Residues Cys148, Cys151, Cys165, Cys168, Cys187, Cys190, Cys201, and Cys204 each coordinate Zn(2+). CXXCXGXG motif repeat units lie at residues 148 to 155 (CDACHGSG), 165 to 172 (CDTCHGSG), 187 to 194 (CPVCQGKG), and 201 to 208 (CPECHGEG).

The protein belongs to the DnaJ family. As to quaternary structure, homodimer. Zn(2+) is required as a cofactor.

Its subcellular location is the cytoplasm. Participates actively in the response to hyperosmotic and heat shock by preventing the aggregation of stress-denatured proteins and by disaggregating proteins, also in an autonomous, DnaK-independent fashion. Unfolded proteins bind initially to DnaJ; upon interaction with the DnaJ-bound protein, DnaK hydrolyzes its bound ATP, resulting in the formation of a stable complex. GrpE releases ADP from DnaK; ATP binding to DnaK triggers the release of the substrate protein, thus completing the reaction cycle. Several rounds of ATP-dependent interactions between DnaJ, DnaK and GrpE are required for fully efficient folding. Also involved, together with DnaK and GrpE, in the DNA replication of plasmids through activation of initiation proteins. In Zymomonas mobilis subsp. mobilis (strain ATCC 31821 / ZM4 / CP4), this protein is Chaperone protein DnaJ.